Here is a 162-residue protein sequence, read N- to C-terminus: Transcription elongation factor GreB (162 aa).

Residues 52 to 73 (KKLLREIDRRVRYLRKRLEDVK) are a coiled coil.

The protein belongs to the GreA/GreB family. GreB subfamily.

In terms of biological role, necessary for efficient RNA polymerase transcription elongation past template-encoded arresting sites. The arresting sites in DNA have the property of trapping a certain fraction of elongating RNA polymerases that pass through, resulting in locked ternary complexes. Cleavage of the nascent transcript by cleavage factors such as GreA or GreB allows the resumption of elongation from the new 3'terminus. GreB releases sequences of up to 9 nucleotides in length. In Pseudomonas putida (strain ATCC 47054 / DSM 6125 / CFBP 8728 / NCIMB 11950 / KT2440), this protein is Transcription elongation factor GreB.